Here is a 121-residue protein sequence, read N- to C-terminus: MKVLLGLLLGYSVLILAHELPDLPRTQHPPKSELSYWCTYVPQCDFCWDCQDGICKNKITESRFIDSNHSIVNCRVFRNSMTQSCLYEISSKMPNHFSMECLHPRPYTGNEIFMRTWGGGG.

Residues 1-17 (MKVLLGLLLGYSVLILA) form the signal peptide.

It belongs to the asfivirus MGF 110 family.

This African swine fever virus (isolate Portugal/Lis 57/1957) (ASFV) protein is Protein MGF 110-14L.